The following is a 384-amino-acid chain: 1-deoxy-D-xylulose 5-phosphate reductoisomerase (384 aa).

Residues Thr-10, Gly-11, Ser-12, Ile-13, Arg-37, Asn-38, and Asn-124 each contribute to the NADPH site. Lys-125 contributes to the 1-deoxy-D-xylulose 5-phosphate binding site. Residue Glu-126 participates in NADPH binding. Asp-150 is a Mn(2+) binding site. Positions 151, 152, 176, and 199 each coordinate 1-deoxy-D-xylulose 5-phosphate. Glu-152 contacts Mn(2+). Gly-205 serves as a coordination point for NADPH. Ser-212, Asn-217, Lys-218, and Glu-221 together coordinate 1-deoxy-D-xylulose 5-phosphate. Residue Glu-221 participates in Mn(2+) binding.

It belongs to the DXR family. The cofactor is Mg(2+). Requires Mn(2+) as cofactor.

The enzyme catalyses 2-C-methyl-D-erythritol 4-phosphate + NADP(+) = 1-deoxy-D-xylulose 5-phosphate + NADPH + H(+). The protein operates within isoprenoid biosynthesis; isopentenyl diphosphate biosynthesis via DXP pathway; isopentenyl diphosphate from 1-deoxy-D-xylulose 5-phosphate: step 1/6. Functionally, catalyzes the NADPH-dependent rearrangement and reduction of 1-deoxy-D-xylulose-5-phosphate (DXP) to 2-C-methyl-D-erythritol 4-phosphate (MEP). The protein is 1-deoxy-D-xylulose 5-phosphate reductoisomerase of Clostridium perfringens (strain ATCC 13124 / DSM 756 / JCM 1290 / NCIMB 6125 / NCTC 8237 / Type A).